The following is a 586-amino-acid chain: Protein NRT1/ PTR FAMILY 5.3 (586 aa).

11 helical membrane passes run 77-97 (WVGT…AHFG), 100-120 (ITFV…TLSV), 141-161 (ASVI…IGTG), 189-209 (FFNW…TVLV), 217-237 (WAIG…IFLL), 334-354 (PVLF…TLFI), 370-390 (IPPA…IVIY), 408-428 (ITLL…MIIA), 449-469 (AVPI…MGLA), 492-512 (LGTS…SILL), and 538-558 (NYYM…LVVI).

This sequence belongs to the major facilitator superfamily. Proton-dependent oligopeptide transporter (POT/PTR) (TC 2.A.17) family. As to expression, expressed in roots and siliques.

The protein localises to the membrane. Its function is as follows. Peptide transporter. In Arabidopsis thaliana (Mouse-ear cress), this protein is Protein NRT1/ PTR FAMILY 5.3 (NPF5.3).